The following is a 410-amino-acid chain: tRNA-guanine(15) transglycosylase (410 aa).

The Nucleophile role is filled by D87. Substrate is bound by residues D122 and G187.

This sequence belongs to the archaeosine tRNA-ribosyltransferase family. Zn(2+) serves as cofactor.

It carries out the reaction guanosine(15) in tRNA + 7-cyano-7-deazaguanine = 7-cyano-7-carbaguanosine(15) in tRNA + guanine. The protein operates within tRNA modification; archaeosine-tRNA biosynthesis. In terms of biological role, exchanges the guanine residue with 7-cyano-7-deazaguanine (preQ0) at position 15 in the dihydrouridine loop (D-loop) of archaeal tRNAs. This is tRNA-guanine(15) transglycosylase from Nanoarchaeum equitans (strain Kin4-M).